We begin with the raw amino-acid sequence, 206 residues long: Proteasome subunit beta 2 (206 aa).

Residues 1–7 constitute a propeptide, removed in mature form; by autocatalysis; that stretch reads MREAVSK. Thr-8 serves as the catalytic Nucleophile.

The protein belongs to the peptidase T1B family. In terms of assembly, the 20S proteasome core is composed of 14 alpha and 14 beta subunits that assemble into four stacked heptameric rings, resulting in a barrel-shaped structure. The two inner rings, each composed of seven catalytic beta subunits, are sandwiched by two outer rings, each composed of seven alpha subunits. The catalytic chamber with the active sites is on the inside of the barrel. Has a gated structure, the ends of the cylinder being occluded by the N-termini of the alpha-subunits. Is capped at one or both ends by the proteasome regulatory ATPase, PAN.

Its subcellular location is the cytoplasm. It carries out the reaction Cleavage of peptide bonds with very broad specificity.. Its activity is regulated as follows. The formation of the proteasomal ATPase PAN-20S proteasome complex, via the docking of the C-termini of PAN into the intersubunit pockets in the alpha-rings, triggers opening of the gate for substrate entry. Interconversion between the open-gate and close-gate conformations leads to a dynamic regulation of the 20S proteasome proteolysis activity. Functionally, component of the proteasome core, a large protease complex with broad specificity involved in protein degradation. The polypeptide is Proteasome subunit beta 2 (Desulfurococcus amylolyticus (strain DSM 18924 / JCM 16383 / VKM B-2413 / 1221n) (Desulfurococcus kamchatkensis)).